Reading from the N-terminus, the 444-residue chain is Maintenance of mitochondrial morphology protein 1 (444 aa).

The Lumenal segment spans residues 1–110 (MNNLDNLAGN…SFSGWSFIEG (110 aa)). Residues 111–131 (FIIGQFSVIIVLIFFIKFFVF) traverse the membrane as a helical segment. Topologically, residues 132 to 444 (SDGSSSNSSN…TDDVPLSKAE (313 aa)) are cytoplasmic. The 213-residue stretch at 207–419 (PSESLDWFNV…EPRFQCIRLP (213 aa)) folds into the SMP-LTD domain.

This sequence belongs to the MMM1 family. Homodimer. Component of the ER-mitochondria encounter structure (ERMES) or MDM complex, composed of MMM1, MDM10, MDM12 and MDM34. An MMM1 homodimer associates with one molecule of MDM12 on each side in a pairwise head-to-tail manner, and the SMP-LTD domains of MMM1 and MDM12 generate a continuous hydrophobic tunnel for phospholipid trafficking.

It localises to the endoplasmic reticulum membrane. Component of the ERMES/MDM complex, which serves as a molecular tether to connect the endoplasmic reticulum (ER) and mitochondria. Components of this complex are involved in the control of mitochondrial shape and protein biogenesis, and function in nonvesicular lipid trafficking between the ER and mitochondria. The MDM12-MMM1 subcomplex functions in the major beta-barrel assembly pathway that is responsible for biogenesis of all outer membrane beta-barrel proteins, and acts in a late step after the SAM complex. The MDM10-MDM12-MMM1 subcomplex further acts in the TOM40-specific pathway after the action of the MDM12-MMM1 complex. Essential for establishing and maintaining the structure of mitochondria and maintenance of mtDNA nucleoids. The polypeptide is Maintenance of mitochondrial morphology protein 1 (Vanderwaltozyma polyspora (strain ATCC 22028 / DSM 70294 / BCRC 21397 / CBS 2163 / NBRC 10782 / NRRL Y-8283 / UCD 57-17) (Kluyveromyces polysporus)).